A 434-amino-acid chain; its full sequence is Putative nuclease OPG089 (434 aa).

Mg(2+) contacts are provided by aspartate 33, aspartate 74, glutamate 168, aspartate 170, aspartate 196, and aspartate 198.

The protein belongs to the XPG/RAD2 endonuclease family. FEN1 subfamily. Mg(2+) is required as a cofactor.

The protein localises to the virion. In terms of biological role, putative nuclease that seems to be required for double-strand break repair, homologous recombination, and production of full-length viral genomic DNA. The protein is Putative nuclease OPG089 (OPG089) of Vaccinia virus (strain Western Reserve) (VACV).